A 310-amino-acid polypeptide reads, in one-letter code: D-apiose import binding protein (310 aa).

A signal peptide spans methionine 1–alanine 21. D-apiofuranose contacts are provided by residues asparagine 35, aspartate 111 to arginine 112, aspartate 158 to asparagine 160, arginine 164, asparagine 214, aspartate 239, and glutamine 260.

It belongs to the bacterial solute-binding protein 2 family.

It is found in the periplasm. In terms of biological role, part of an ABC transporter complex involved in D-apiose import. Binds D-apiose, D-ribose and D-ribulose. The chain is D-apiose import binding protein from Actinobacillus succinogenes (strain ATCC 55618 / DSM 22257 / CCUG 43843 / 130Z).